The primary structure comprises 559 residues: NXPE family member 3 (559 aa).

The N-terminal stretch at 1–30 (MWTNFFKLRLFCCLLAVLMVVVLVINVTQV) is a signal peptide. N-linked (GlcNAc...) asparagine glycosylation is found at Asn-237, Asn-292, and Asn-346.

The protein belongs to the NXPE family.

It is found in the secreted. The protein is NXPE family member 3 (NXPE3) of Homo sapiens (Human).